The following is a 572-amino-acid chain: Far upstream element-binding protein 3 (572 aa).

N-acetylalanine is present on Ala2. Residues Lys15 and Lys57 each participate in a glycyl lysine isopeptide (Lys-Gly) (interchain with G-Cter in SUMO2) cross-link. At Thr76 the chain carries Phosphothreonine. 4 KH domains span residues 77 to 141, 162 to 228, 253 to 317, and 354 to 421; these read VITE…KRLL, STIQ…REMV, GGSI…AHII, and VQEI…RQLI. A Phosphoserine modification is found at Ser296. Residues 426–521 are disordered; the sequence is GGTNLGAPGA…SQPNYSKAWE (96 aa). A compositionally biased stretch (low complexity) spans 496–514; that stretch reads QQPTQQVPSQQSQPQSSQP. Phosphoserine occurs at positions 539 and 569.

In terms of tissue distribution, detected in a number of cell lines.

The protein resides in the nucleus. May interact with single-stranded DNA from the far-upstream element (FUSE). May activate gene expression. The chain is Far upstream element-binding protein 3 (FUBP3) from Homo sapiens (Human).